The primary structure comprises 457 residues: V-type ATP synthase beta chain (457 aa).

This sequence belongs to the ATPase alpha/beta chains family.

Functionally, produces ATP from ADP in the presence of a proton gradient across the membrane. The V-type beta chain is a regulatory subunit. The protein is V-type ATP synthase beta chain of Clostridioides difficile (strain 630) (Peptoclostridium difficile).